The following is a 61-amino-acid chain: Large ribosomal subunit protein bL32 (61 aa).

It belongs to the bacterial ribosomal protein bL32 family.

This is Large ribosomal subunit protein bL32 from Syntrophus aciditrophicus (strain SB).